Here is a 122-residue protein sequence, read N- to C-terminus: MIQTQSYLNVADNSGARKIMCIRVLGTSNPSYASIGDVIIGVVKDASPNMPVKRSDVVRAVVVRTRKALRRNDGMSIRFDDNAAVIINQDNNPRGTRVFGPIARELRDKNFSKIISLAPEVV.

Belongs to the universal ribosomal protein uL14 family. As to quaternary structure, part of the 50S ribosomal subunit.

The protein resides in the plastid. The protein localises to the chloroplast. Its function is as follows. Binds to 23S rRNA. The polypeptide is Large ribosomal subunit protein uL14c (Porphyra purpurea (Red seaweed)).